We begin with the raw amino-acid sequence, 128 residues long: Large ribosomal subunit protein bL21 (128 aa).

A disordered region spans residues 104–128 (GKSPSVGPRPKRVKAEPAPAADAAE). Positions 119 to 128 (EPAPAADAAE) are enriched in low complexity.

It belongs to the bacterial ribosomal protein bL21 family. As to quaternary structure, part of the 50S ribosomal subunit. Contacts protein L20.

Its function is as follows. This protein binds to 23S rRNA in the presence of protein L20. The polypeptide is Large ribosomal subunit protein bL21 (Rhodopseudomonas palustris (strain HaA2)).